Reading from the N-terminus, the 134-residue chain is ATP synthase epsilon chain (134 aa).

Belongs to the ATPase epsilon chain family. F-type ATPases have 2 components, CF(1) - the catalytic core - and CF(0) - the membrane proton channel. CF(1) has five subunits: alpha(3), beta(3), gamma(1), delta(1), epsilon(1). CF(0) has three main subunits: a, b and c.

Its subcellular location is the cell inner membrane. Produces ATP from ADP in the presence of a proton gradient across the membrane. This is ATP synthase epsilon chain from Sinorhizobium medicae (strain WSM419) (Ensifer medicae).